We begin with the raw amino-acid sequence, 47 residues long: Photosystem II reaction center protein K (47 aa).

Residues 1 to 10 (MAPLTLDLLA) constitute a propeptide that is removed on maturation. Residues 26–46 (LPLIPLLFFLLVFVWQAAVGF) form a helical membrane-spanning segment.

This sequence belongs to the PsbK family. PSII is composed of 1 copy each of membrane proteins PsbA, PsbB, PsbC, PsbD, PsbE, PsbF, PsbH, PsbI, PsbJ, PsbK, PsbL, PsbM, PsbT, PsbX, PsbY, Psb30/Ycf12, peripheral proteins PsbO, CyanoQ (PsbQ), PsbU, PsbV and a large number of cofactors. It forms dimeric complexes.

It localises to the cellular thylakoid membrane. Its function is as follows. One of the components of the core complex of photosystem II (PSII). PSII is a light-driven water:plastoquinone oxidoreductase that uses light energy to abstract electrons from H(2)O, generating O(2) and a proton gradient subsequently used for ATP formation. It consists of a core antenna complex that captures photons, and an electron transfer chain that converts photonic excitation into a charge separation. This is Photosystem II reaction center protein K from Prochlorococcus marinus (strain SARG / CCMP1375 / SS120).